The chain runs to 123 residues: Small ribosomal subunit protein uS12 (123 aa).

Asp-89 is modified (3-methylthioaspartic acid).

This sequence belongs to the universal ribosomal protein uS12 family. As to quaternary structure, part of the 30S ribosomal subunit. Contacts proteins S8 and S17. May interact with IF1 in the 30S initiation complex.

Functionally, with S4 and S5 plays an important role in translational accuracy. Interacts with and stabilizes bases of the 16S rRNA that are involved in tRNA selection in the A site and with the mRNA backbone. Located at the interface of the 30S and 50S subunits, it traverses the body of the 30S subunit contacting proteins on the other side and probably holding the rRNA structure together. The combined cluster of proteins S8, S12 and S17 appears to hold together the shoulder and platform of the 30S subunit. The sequence is that of Small ribosomal subunit protein uS12 from Desulfovibrio desulfuricans (strain ATCC 27774 / DSM 6949 / MB).